The primary structure comprises 501 residues: Aldehyde dehydrogenase 1A1 (501 aa).

S2 carries the N-acetylserine modification. 2 positions are modified to N6-acetyllysine: K91 and K128. NAD(+) is bound by residues 167–170 (IPWN), 193–196 (KPAE), 226–227 (GP), and 246–247 (GS). The residue at position 252 (K252) is an N6-acetyllysine. Catalysis depends on E269, which acts as the Proton acceptor. 269-271 (ELG) is an NAD(+) binding site. Residue C303 is the Nucleophile of the active site. Residues 336 to 501 (LTPGVTQGPQ…VTVKISQKNS (166 aa)) form a mediates interaction with PRMT3 region. T337 is modified (phosphothreonine). An NAD(+)-binding site is contributed by 349–353 (EQYDK). 2 positions are modified to N6-acetyllysine: K353 and K367. NAD(+) is bound at residue 400–402 (EIF). N6-acetyllysine is present on K410. S413 is subject to Phosphoserine. N6-acetyllysine is present on residues K419, K435, and K495.

It belongs to the aldehyde dehydrogenase family. In terms of assembly, homotetramer. Interacts with PRMT3; the interaction is direct, inhibits ALDH1A1 aldehyde dehydrogenase activity and is independent of the methyltransferase activity of PRMT3. In terms of processing, the N-terminus is blocked most probably by acetylation. As to expression, expressed by erythrocytes (at protein level).

The protein resides in the cytoplasm. The protein localises to the cytosol. Its subcellular location is the cell projection. It is found in the axon. The catalysed reaction is an aldehyde + NAD(+) + H2O = a carboxylate + NADH + 2 H(+). It carries out the reaction all-trans-retinal + NAD(+) + H2O = all-trans-retinoate + NADH + 2 H(+). It catalyses the reaction 9-cis-retinal + NAD(+) + H2O = 9-cis-retinoate + NADH + 2 H(+). The enzyme catalyses 11-cis-retinal + NAD(+) + H2O = 11-cis-retinoate + NADH + 2 H(+). The catalysed reaction is 13-cis-retinal + NAD(+) + H2O = 13-cis-retinoate + NADH + 2 H(+). It carries out the reaction 3-deoxyglucosone + NAD(+) + H2O = 2-dehydro-3-deoxy-D-gluconate + NADH + 2 H(+). It catalyses the reaction (E)-4-hydroxynon-2-enal + NAD(+) + H2O = (E)-4-hydroxynon-2-enoate + NADH + 2 H(+). The enzyme catalyses malonaldehyde + NAD(+) + H2O = 3-oxopropanoate + NADH + 2 H(+). The catalysed reaction is hexanal + NAD(+) + H2O = hexanoate + NADH + 2 H(+). It carries out the reaction propanal + NAD(+) + H2O = propanoate + NADH + 2 H(+). It catalyses the reaction acetaldehyde + NAD(+) + H2O = acetate + NADH + 2 H(+). The enzyme catalyses benzaldehyde + NAD(+) + H2O = benzoate + NADH + 2 H(+). The catalysed reaction is 4-aminobutanal + NAD(+) + H2O = 4-aminobutanoate + NADH + 2 H(+). The protein operates within cofactor metabolism; retinol metabolism. Its activity is regulated as follows. Inhibited by citral, disulfiram, and cyanamide. Activated by diethylstilbestrol. Inhibited by duocarmycin analogs. In terms of biological role, cytosolic dehydrogenase that catalyzes the irreversible oxidation of a wide range of aldehydes to their corresponding carboxylic acid. Functions downstream of retinol dehydrogenases and catalyzes the oxidation of retinaldehyde into retinoic acid, the second step in the oxidation of retinol/vitamin A into retinoic acid. This pathway is crucial to control the levels of retinol and retinoic acid, two important molecules which excess can be teratogenic and cytotoxic. Also oxidizes aldehydes resulting from lipid peroxidation like (E)-4-hydroxynon-2-enal/HNE, malonaldehyde and hexanal that form protein adducts and are highly cytotoxic. By participating for instance to the clearance of (E)-4-hydroxynon-2-enal/HNE in the lens epithelium prevents the formation of HNE-protein adducts and lens opacification. Also functions downstream of fructosamine-3-kinase in the fructosamine degradation pathway by catalyzing the oxidation of 3-deoxyglucosone, the carbohydrate product of fructosamine 3-phosphate decomposition, which is itself a potent glycating agent that may react with lysine and arginine side-chains of proteins. Also has an aminobutyraldehyde dehydrogenase activity and is probably part of an alternative pathway for the biosynthesis of GABA/4-aminobutanoate in midbrain, thereby playing a role in GABAergic synaptic transmission. The protein is Aldehyde dehydrogenase 1A1 of Homo sapiens (Human).